We begin with the raw amino-acid sequence, 283 residues long: Pantothenate synthetase (283 aa).

An ATP-binding site is contributed by 30 to 37; the sequence is MGYLHEGH. The active-site Proton donor is the His37. Gln61 provides a ligand contact to (R)-pantoate. Gln61 is a beta-alanine binding site. Residue 147 to 150 coordinates ATP; sequence GLKD. Gln153 contacts (R)-pantoate. Residues Val176 and 184–187 each bind ATP; that span reads KSSR.

The protein belongs to the pantothenate synthetase family. Homodimer.

It localises to the cytoplasm. The enzyme catalyses (R)-pantoate + beta-alanine + ATP = (R)-pantothenate + AMP + diphosphate + H(+). It participates in cofactor biosynthesis; (R)-pantothenate biosynthesis; (R)-pantothenate from (R)-pantoate and beta-alanine: step 1/1. In terms of biological role, catalyzes the condensation of pantoate with beta-alanine in an ATP-dependent reaction via a pantoyl-adenylate intermediate. The polypeptide is Pantothenate synthetase (Halalkalibacterium halodurans (strain ATCC BAA-125 / DSM 18197 / FERM 7344 / JCM 9153 / C-125) (Bacillus halodurans)).